Reading from the N-terminus, the 627-residue chain is uncharacterized protein (627 aa).

7 disordered regions span residues E57 to D82, P96 to G121, G160 to Y184, A198 to G232, S247 to P277, R335 to Y358, and V449 to S579. A compositionally biased stretch (low complexity) spans S169 to A183. Positions Q336–A357 are enriched in low complexity. Over residues F450–A464 the composition is skewed to basic and acidic residues.

This is an uncharacterized protein from Treponema pallidum (strain Nichols).